Consider the following 415-residue polypeptide: Serine hydroxymethyltransferase (415 aa).

Residues leucine 117 and 121–123 (GHL) contribute to the (6S)-5,6,7,8-tetrahydrofolate site. At lysine 226 the chain carries N6-(pyridoxal phosphate)lysine. Glutamate 241 contributes to the (6S)-5,6,7,8-tetrahydrofolate binding site.

It belongs to the SHMT family. As to quaternary structure, homodimer. Pyridoxal 5'-phosphate serves as cofactor.

It is found in the cytoplasm. It carries out the reaction (6R)-5,10-methylene-5,6,7,8-tetrahydrofolate + glycine + H2O = (6S)-5,6,7,8-tetrahydrofolate + L-serine. The protein operates within one-carbon metabolism; tetrahydrofolate interconversion. It functions in the pathway amino-acid biosynthesis; glycine biosynthesis; glycine from L-serine: step 1/1. In terms of biological role, catalyzes the reversible interconversion of serine and glycine with tetrahydrofolate (THF) serving as the one-carbon carrier. This reaction serves as the major source of one-carbon groups required for the biosynthesis of purines, thymidylate, methionine, and other important biomolecules. Also exhibits THF-independent aldolase activity toward beta-hydroxyamino acids, producing glycine and aldehydes, via a retro-aldol mechanism. This chain is Serine hydroxymethyltransferase, found in Bacillus pumilus (strain SAFR-032).